The primary structure comprises 396 residues: Exodeoxyribonuclease 7 large subunit (396 aa).

This sequence belongs to the XseA family. As to quaternary structure, heterooligomer composed of large and small subunits.

It localises to the cytoplasm. The catalysed reaction is Exonucleolytic cleavage in either 5'- to 3'- or 3'- to 5'-direction to yield nucleoside 5'-phosphates.. In terms of biological role, bidirectionally degrades single-stranded DNA into large acid-insoluble oligonucleotides, which are then degraded further into small acid-soluble oligonucleotides. This chain is Exodeoxyribonuclease 7 large subunit, found in Clostridium tetani (strain Massachusetts / E88).